A 508-amino-acid polypeptide reads, in one-letter code: 3-octaprenyl-4-hydroxybenzoate carboxy-lyase (508 aa).

Residue Asn172 participates in Mn(2+) binding. Prenylated FMN contacts are provided by residues 175 to 177 (IYR), 189 to 191 (RWL), and 194 to 195 (RG). Residue Glu238 participates in Mn(2+) binding. Asp287 acts as the Proton donor in catalysis. Positions 483 to 508 (GEYGIATPPPPPRHSPPSDERGHDDV) are disordered. The span at 498-508 (PPSDERGHDDV) shows a compositional bias: basic and acidic residues.

The protein belongs to the UbiD family. In terms of assembly, homohexamer. The cofactor is prenylated FMN. It depends on Mn(2+) as a cofactor.

It localises to the cell membrane. It catalyses the reaction a 4-hydroxy-3-(all-trans-polyprenyl)benzoate + H(+) = a 2-(all-trans-polyprenyl)phenol + CO2. Its pathway is cofactor biosynthesis; ubiquinone biosynthesis. In terms of biological role, catalyzes the decarboxylation of 3-octaprenyl-4-hydroxy benzoate to 2-octaprenylphenol, an intermediate step in ubiquinone biosynthesis. This chain is 3-octaprenyl-4-hydroxybenzoate carboxy-lyase, found in Chromohalobacter salexigens (strain ATCC BAA-138 / DSM 3043 / CIP 106854 / NCIMB 13768 / 1H11).